We begin with the raw amino-acid sequence, 313 residues long: tRNA dimethylallyltransferase (313 aa).

11–18 (GPTAGGKT) is an ATP binding site. 13–18 (TAGGKT) is a binding site for substrate. Interaction with substrate tRNA stretches follow at residues 36–39 (DSAL), 160–164 (QRIGR), and 243–248 (RCVGYR).

The protein belongs to the IPP transferase family. Monomer. The cofactor is Mg(2+).

The enzyme catalyses adenosine(37) in tRNA + dimethylallyl diphosphate = N(6)-dimethylallyladenosine(37) in tRNA + diphosphate. Functionally, catalyzes the transfer of a dimethylallyl group onto the adenine at position 37 in tRNAs that read codons beginning with uridine, leading to the formation of N6-(dimethylallyl)adenosine (i(6)A). The polypeptide is tRNA dimethylallyltransferase (Neisseria meningitidis serogroup B (strain ATCC BAA-335 / MC58)).